Consider the following 315-residue polypeptide: Small ribosomal subunit protein uS3 (315 aa).

Positions 38–106 (IRKMMSRGME…QVQLNILEVK (69 aa)) constitute a KH type-2 domain. Residues 211–315 (AEREAQEALQ…VANTPEKAEE (105 aa)) are disordered. A compositionally biased stretch (basic residues) spans 222-232 (QTRRERPRRGP). The span at 265–315 (APAETPAGEAAATEPTAPVAEPATAAASAPAEAASAPAEAAVANTPEKAEE) shows a compositional bias: low complexity.

This sequence belongs to the universal ribosomal protein uS3 family. As to quaternary structure, part of the 30S ribosomal subunit. Forms a tight complex with proteins S10 and S14.

Its function is as follows. Binds the lower part of the 30S subunit head. Binds mRNA in the 70S ribosome, positioning it for translation. This Frankia casuarinae (strain DSM 45818 / CECT 9043 / HFP020203 / CcI3) protein is Small ribosomal subunit protein uS3.